The chain runs to 238 residues: Ribonuclease PH (238 aa).

Phosphate is bound by residues arginine 86 and 124 to 126; that span reads GTR.

This sequence belongs to the RNase PH family. In terms of assembly, homohexameric ring arranged as a trimer of dimers.

It catalyses the reaction tRNA(n+1) + phosphate = tRNA(n) + a ribonucleoside 5'-diphosphate. Functionally, phosphorolytic 3'-5' exoribonuclease that plays an important role in tRNA 3'-end maturation. Removes nucleotide residues following the 3'-CCA terminus of tRNAs; can also add nucleotides to the ends of RNA molecules by using nucleoside diphosphates as substrates, but this may not be physiologically important. Probably plays a role in initiation of 16S rRNA degradation (leading to ribosome degradation) during starvation. The chain is Ribonuclease PH from Histophilus somni (strain 2336) (Haemophilus somnus).